The primary structure comprises 628 residues: Monoterpene synthase like 2, chloroplastic (628 aa).

The Mg(2+) site is built by aspartate 379, aspartate 383, and aspartate 531. A DDXXD motif motif is present at residues 379–383; it reads DDIYD.

The protein belongs to the terpene synthase family. Tpsd subfamily. Mg(2+) serves as cofactor. The cofactor is Mn(2+).

The protein localises to the plastid. The protein resides in the chloroplast. It participates in terpene metabolism; oleoresin biosynthesis. The protein operates within secondary metabolite biosynthesis; terpenoid biosynthesis. Monoterpene synthase (TPS) involved in the biosynthesis of monoterpene natural products included in conifer oleoresin secretions and volatile emissions; these compounds contribute to biotic and abiotic stress defense against herbivores and pathogens. The sequence is that of Monoterpene synthase like 2, chloroplastic from Pinus banksiana (Jack pine).